Consider the following 216-residue polypeptide: NADH-quinone oxidoreductase subunit C (216 aa).

This sequence belongs to the complex I 30 kDa subunit family. In terms of assembly, NDH-1 is composed of 14 different subunits. Subunits NuoB, C, D, E, F, and G constitute the peripheral sector of the complex.

It is found in the cell inner membrane. It catalyses the reaction a quinone + NADH + 5 H(+)(in) = a quinol + NAD(+) + 4 H(+)(out). NDH-1 shuttles electrons from NADH, via FMN and iron-sulfur (Fe-S) centers, to quinones in the respiratory chain. The immediate electron acceptor for the enzyme in this species is believed to be ubiquinone. Couples the redox reaction to proton translocation (for every two electrons transferred, four hydrogen ions are translocated across the cytoplasmic membrane), and thus conserves the redox energy in a proton gradient. This chain is NADH-quinone oxidoreductase subunit C, found in Francisella tularensis subsp. holarctica (strain FTNF002-00 / FTA).